The chain runs to 482 residues: Exodeoxyribonuclease I (482 aa).

In terms of domain architecture, Exonuclease spans 13 to 194; it reads LFYDYETFGI…TSDVYATIEL (182 aa). Mg(2+)-binding residues include aspartate 16, glutamate 18, and aspartate 187. Residue glutamate 18 participates in substrate binding. The ExoI SH3-like domain occupies 203 to 351; it reads PKLFDFFFKY…LVKNVLLKKN (149 aa). In terms of domain architecture, ExoI C-terminal spans 355–471; it reads NSLNVDLQIY…DLLKYVFKKY (117 aa).

In terms of assembly, monomer. Interacts with ssb (via C-terminus); this interaction stimulates the exonuclease activity by recruiting the enzyme to its substrate. Mg(2+) is required as a cofactor.

It catalyses the reaction Exonucleolytic cleavage in the 3'- to 5'-direction to yield nucleoside 5'-phosphates.. Functionally, degrades single-stranded DNA (ssDNA) in a highly processive manner. Also functions as a DNA deoxyribophosphodiesterase that releases deoxyribose-phosphate moieties following the cleavage of DNA at an apurinic/apyrimidinic (AP) site by either an AP endonuclease or AP lyase. The protein is Exodeoxyribonuclease I (sbcB) of Buchnera aphidicola subsp. Schizaphis graminum (strain Sg).